The sequence spans 335 residues: MTANVGINGFGRIGRLVLRIALSRDDINVIAINDPFIAPDYAAYMFKYDSTHGKFKGTVTHEGKYLVINGKKIEVFQERDPANIPWGKEGVDYVLDSTGVFTTIEGAQKHIDAGAKKVIITAPSKDAPMFVVGVNHEEYTPDIKILSNASCTTNCLAPLAKVINDTYGIEEGLMTTIHSITATQKTVDGPSHKDWRGGRTASGNIIPSSTGAAKAVGKVLPALAGKLTGMSMRVPTTDVSVVDLTVNLKKPTTYEDICATMKKAAEGPLAGILGYTDEAVVSSDFLTDSRSSVFDAKAGILLTPTFVKLVSWYDNEYGYSTRVVDLLQHVAKVSA.

NAD(+) is bound by residues 12–13, D34, and R79; that span reads RI. Residues 150–152, T181, 210–211, and R233 each bind D-glyceraldehyde 3-phosphate; these read SCT and TG. The active-site Nucleophile is C151. Residue N315 participates in NAD(+) binding.

This sequence belongs to the glyceraldehyde-3-phosphate dehydrogenase family. Homotetramer.

It is found in the cytoplasm. It carries out the reaction D-glyceraldehyde 3-phosphate + phosphate + NAD(+) = (2R)-3-phospho-glyceroyl phosphate + NADH + H(+). The protein operates within carbohydrate degradation; glycolysis; pyruvate from D-glyceraldehyde 3-phosphate: step 1/5. This chain is Glyceraldehyde-3-phosphate dehydrogenase (GPD), found in Ogataea parapolymorpha (strain ATCC 26012 / BCRC 20466 / JCM 22074 / NRRL Y-7560 / DL-1) (Yeast).